The primary structure comprises 319 residues: HTH-type transcriptional regulator YidZ (319 aa).

Positions 8–65 (LDLNLLLCLQLLMQERSVTKAAKRMNVTPSAVSKSLAKLRAWFDDPLFVNSPLGLSPT) constitute an HTH lysR-type domain. The segment at residues 25–44 (VTKAAKRMNVTPSAVSKSLA) is a DNA-binding region (H-T-H motif).

This sequence belongs to the LysR transcriptional regulatory family.

Its function is as follows. Involved in anaerobic NO protection. The polypeptide is HTH-type transcriptional regulator YidZ (Escherichia coli O139:H28 (strain E24377A / ETEC)).